The sequence spans 37 residues: Large ribosomal subunit protein bL36A (37 aa).

The protein belongs to the bacterial ribosomal protein bL36 family.

This is Large ribosomal subunit protein bL36A from Actinobacillus pleuropneumoniae serotype 5b (strain L20).